Here is a 256-residue protein sequence, read N- to C-terminus: Ribonuclease T2 (256 aa).

The signal sequence occupies residues 1 to 24 (MRPAALRGALLGCLCLALLCLGGA). Cys-48 and Cys-55 are oxidised to a cystine. His-65 is a catalytic residue. Intrachain disulfides connect Cys-75/Cys-121, Cys-184/Cys-241, and Cys-202/Cys-213. N-linked (GlcNAc...) asparagine glycosylation is found at Asn-76 and Asn-106. Active-site residues include Glu-114 and His-118. An N-linked (GlcNAc...) asparagine glycan is attached at Asn-212.

Belongs to the RNase T2 family. As to expression, ubiquitous. Higher expression levels observed in the temporal lobe and fetal brain.

Its subcellular location is the secreted. It is found in the lysosome lumen. The protein localises to the endoplasmic reticulum lumen. The protein resides in the mitochondrion intermembrane space. The catalysed reaction is a ribonucleotidyl-ribonucleotide-RNA + H2O = a 3'-end 3'-phospho-ribonucleotide-RNA + a 5'-end dephospho-ribonucleoside-RNA + H(+). It carries out the reaction an adenylyl-uridine-RNA = a 3'-end 2',3'-cyclophospho-AMP-RNA + a 5'-end dephospho-uridine-RNA. It catalyses the reaction a guanylyl-uridine-RNA = a 3'-end 2',3'-cyclophospho-GMP-RNA + a 5'-end dephospho-uridine-RNA. With respect to regulation, inhibited by Zn(2+) and Cu(2+). Its function is as follows. Ribonuclease that plays an essential role in innate immune response by recognizing and degrading RNAs from microbial pathogens that are subsequently sensed by TLR8. Cleaves preferentially single-stranded RNA molecules between purine and uridine residues, which critically contributes to the supply of catabolic uridine and the generation of purine-2',3'-cyclophosphate-terminated oligoribonucleotides. In turn, RNase T2 degradation products promote the RNA-dependent activation of TLR8. In plasmacytoid dendritic cells, it cooperates with PLD3 or PLD4 5'-&gt;3' exonucleases to process RNA fragments and release 2',3'-cyclic guanosine monophosphate (2',3'-cGMP), a potent stimulatory ligand for TLR7. Also plays a key role in degradation of mitochondrial RNA and processing of non-coding RNA imported from the cytosol into mitochondria. Participates as well in degradation of mitochondrion-associated cytosolic rRNAs. This chain is Ribonuclease T2 (RNASET2), found in Homo sapiens (Human).